The following is a 596-amino-acid chain: MRQRTPFARPGLLASAALALVLGPLAVAAQEQAAPPKDPAAALEDHKTKTDNRYEPSLDNLAQQDVAALGAPEGIPALSDAQYNEANKIYFERCAGCHGVLRKGATGKALTPDLTRDLGFDYLQSFITYGSPAGMPNWGTSGELTAEQVDLMANYLLLDPAAPPEFGMKEMRESWQVHVAPEDRPTQQENDWDLENLFSVTLRDAGQIALIDGTTYEIKSVLDTGYAVHISRMSASGRYLFVIGRDGKVNMIDLWMKEPATVAEIKIGSEARSIETSKMEGWEDKYAIAGAYWPPQYVIMDGETLEPMKIQSTRGMIYDEQEYHPEPRVAAILASHYRPEFIVNVKETGKILLVDYTDLKNLKTTEIEAERFLHDGGLDGSHRYFITAANARNKLVVIDTKEGKLVAIEDTGGQTPHPGRGANFVHPTFGPVWATSHMGDDSVALIGTDPEGHPDNAWKILDSFPALGGGSLFIKTHPNSQYLYVDATLNPEAEISGSVAVFDTKAMTGDGSDPEFKTLPIAEWAGIAEGQPRVVQGEFNKDGTEVWFSVWNGKDQESALVVVDDKTLELKHVIKDERLVTPTGKFNVYNTMTDTY.

The first 29 residues, Met1–Ala29, serve as a signal peptide directing secretion. Residues Gln30–Pro76 form an N-terminal tail region. His46 provides a ligand contact to heme c. Tyr54 and Ser57 together coordinate heme d1. The Cytochrome c domain maps to Ala77–Ala162. Heme c is bound by residues Cys94, Cys97, His98, Lys108, and Tyr122. Residues Trp138, Arg203, His229, Arg232, Arg245, Arg272, Tyr292, Arg420, Gln536, and Thr583 each contribute to the heme d1 site. The tract at residues Pro163–Tyr596 is D1-heme domain.

Homodimer. Heme c serves as cofactor. Heme is required as a cofactor.

Its subcellular location is the periplasm. The enzyme catalyses nitric oxide + Fe(III)-[cytochrome c] + H2O = Fe(II)-[cytochrome c] + nitrite + 2 H(+). It carries out the reaction A + NH4(+) + H2O = hydroxylamine + AH2 + H(+). Its function is as follows. Inactivation of this cytochrome oxidase results in the loss of nitrite and nitric oxide reductase activities, but not of nitrous oxide reductase activity. In Paracoccus denitrificans (strain Pd 1222), this protein is Nitrite reductase (nirS).